The primary structure comprises 602 residues: Glutamyl-tRNA(Gln) amidotransferase subunit B, mitochondrial (602 aa).

The protein belongs to the GatB/GatE family. GatB subfamily. Subunit of the heterotrimeric GatCAB amidotransferase (AdT) complex, composed of A, B and C subunits.

Its subcellular location is the mitochondrion. The enzyme catalyses L-glutamyl-tRNA(Gln) + L-glutamine + ATP + H2O = L-glutaminyl-tRNA(Gln) + L-glutamate + ADP + phosphate + H(+). Allows the formation of correctly charged Gln-tRNA(Gln) through the transamidation of misacylated Glu-tRNA(Gln) in the mitochondria. The reaction takes place in the presence of glutamine and ATP through an activated gamma-phospho-Glu-tRNA(Gln). The chain is Glutamyl-tRNA(Gln) amidotransferase subunit B, mitochondrial from Paracoccidioides lutzii (strain ATCC MYA-826 / Pb01) (Paracoccidioides brasiliensis).